Here is an 842-residue protein sequence, read N- to C-terminus: MYSNKSFQRRQRQQVAESRSEEKFSRSLVRLNAQSLLDSSGNNTTTKNVNSDVVIVVMEGRGSCEGHIGIALHDTCFPEIHLCEFVDSREYTTLKTMINVHEAFDIVIQNGNEERGSTKLLGEALMTAFPEASLQSISSKYFNSERGERQLQSLMNAEVSTVSEGCLRRTLALGALAVLLKYIHETRCVFFRVKSLRIKEMGVNDTCMIDFVSWESLEIVDADDASKARKFQMKQKRTLMSVLNHTVTTNGYRLLRSSVLQPSTDVYLIQSRQEAIEELIGKPQLKDKLRRTLSRAHELDRVIAMCIQTSTSWTVRESEAKINQIIKLMHTLKVIQGIRTLLHSAKMKSNILIEKTEFLKDPRFDQIMNILVEKVDDSLLDGKKNSLHLQNTKCYAIRHFVAVQLDLARQTYEEIIRNVEETGAREIAEYFHGNSSVRLSFSQSRGFHYTFVTRQAESVTIPRYFLDVFRNRTTVTFNSRKVIAYNDRLEQVVAEMFLASDVIVCDMIEEMQPMIPVLYYAMDALSSIDFLCGLATYSDLRDTCKPTFGPSFSISQGRHPILDWDDSEKTITNDTCLTRDRRFGIITGPNMAGKSTYLKQTAQLAIMAQIGCFIPANYASLPIFNRIFSRMGHNDELIRNKSAFASEMSDAAAIVQYADKNSLVVLDELARSTSTEEGIAITYAICEKVLKLQSYTFLATHFLDIAALANYSNAIDNYHFLPQTDENSTKKHKLLRGQYRGPLYGFELVELSTIPDEVIEHAQSLATELRANVEDTERDYDSERRRIKVYMNHRFRECAEYFMDTHGEKWKEEKEAIDKMKALRKYLVDELAKIDSQEQMCQ.

Positions 1–21 are disordered; it reads MYSNKSFQRRQRQQVAESRSE. Residue 588–595 participates in ATP binding; that stretch reads GPNMAGKS.

Belongs to the DNA mismatch repair MutS family. In terms of assembly, heterooligomer of him-14 and msh-5.

The protein localises to the nucleus. In terms of biological role, required during the pachytene stage of meiotic prophase for the formation of crossovers between homologous chromosomes. Together with msh-5 and zhp-3 plays a role in the activation of DNA damage-dependent apoptosis at the DNA damage checkpoint in pachytene cells. Not needed for pairing or synapsis. May promote crossing over by interfering with Holliday junction branch migration. Has no apparent role in DNA mismatch repair. The sequence is that of MutS protein homolog him-14 from Caenorhabditis elegans.